The chain runs to 124 residues: S-adenosylmethionine decarboxylase proenzyme (124 aa).

S63 serves as the catalytic Schiff-base intermediate with substrate; via pyruvic acid. At S63 the chain carries Pyruvic acid (Ser); by autocatalysis. Residue H68 is the Proton acceptor; for processing activity of the active site. The Proton donor; for catalytic activity role is filled by C83.

Belongs to the prokaryotic AdoMetDC family. Type 1 subfamily. In terms of assembly, heterotetramer of two alpha and two beta chains arranged as a dimer of alpha/beta heterodimers. Requires pyruvate as cofactor. Post-translationally, is synthesized initially as an inactive proenzyme. Formation of the active enzyme involves a self-maturation process in which the active site pyruvoyl group is generated from an internal serine residue via an autocatalytic post-translational modification. Two non-identical subunits are generated from the proenzyme in this reaction, and the pyruvate is formed at the N-terminus of the alpha chain, which is derived from the carboxyl end of the proenzyme. The post-translation cleavage follows an unusual pathway, termed non-hydrolytic serinolysis, in which the side chain hydroxyl group of the serine supplies its oxygen atom to form the C-terminus of the beta chain, while the remainder of the serine residue undergoes an oxidative deamination to produce ammonia and the pyruvoyl group blocking the N-terminus of the alpha chain.

The enzyme catalyses S-adenosyl-L-methionine + H(+) = S-adenosyl 3-(methylsulfanyl)propylamine + CO2. It participates in amine and polyamine biosynthesis; S-adenosylmethioninamine biosynthesis; S-adenosylmethioninamine from S-adenosyl-L-methionine: step 1/1. Catalyzes the decarboxylation of S-adenosylmethionine to S-adenosylmethioninamine (dcAdoMet), the propylamine donor required for the synthesis of the polyamines spermine and spermidine from the diamine putrescine. In Geobacillus sp. (strain WCH70), this protein is S-adenosylmethionine decarboxylase proenzyme.